Here is an 882-residue protein sequence, read N- to C-terminus: Piwi-like protein 3 (882 aa).

The span at 1 to 15 (MPGRARTRARGRARR) shows a compositional bias: basic residues. A disordered region spans residues 1-91 (MPGRARTRAR…EAGLHTAPLQ (91 aa)). Over residues 32-46 (SATTQEPPQLQSTPR) the composition is skewed to polar residues. Residues 293–406 (TAYDFIKRTS…LIPQLCHMTG (114 aa)) enclose the PAZ domain. The region spanning 578–868 (KVICILPNDD…LAYLVGQSIH (291 aa)) is the Piwi domain.

It belongs to the argonaute family. Piwi subfamily. As to expression, expressed in testis.

The protein localises to the cytoplasm. May play a role during spermatogenesis by repressing transposable elements and preventing their mobilization, which is essential for the germline integrity. Acts via the piRNA metabolic process, which mediates the repression of transposable elements during meiosis by forming complexes composed of piRNAs and Piwi proteins and govern the methylation and subsequent repression of transposons. Directly binds piRNAs, a class of 24 to 30 nucleotide RNAs that are generated by a Dicer-independent mechanism and are primarily derived from transposons and other repeated sequence elements. Besides their function in transposable elements repression, piRNAs are probably involved in other processes during meiosis such as translation regulation. The sequence is that of Piwi-like protein 3 (PIWIL3) from Homo sapiens (Human).